The sequence spans 113 residues: Insulin-like peptide 02 (113 aa).

The signal sequence occupies residues 1 to 22 (MFYLTFLLFGAICIGQIQLGQP). The propeptide occupies 23–42 (VKFKVNEDGHRPSVYPIKYR). Intrachain disulfides connect Cys44–Cys99, Cys56–Cys112, and Cys98–Cys103. Positions 62-87 (RRKRSIEADIITDKDTANSYFNRVKR) are cleaved as a propeptide — c peptide.

It belongs to the insulin family.

It is found in the secreted. In terms of biological role, insulin decreases blood glucose concentration. May have evolved to activate insulin receptors (INSR) in vertebrates. Molecular docking studies reveals unique interaction with the human insulin receptor. In vivo, insulin-like peptide injection reduces blood glucose levels in two models of zebrafish diabetes (streptozotocin- and glucose-induced). Also shorter swimming distance of zebrafish larvae, an effect which is not observed with human insulin. The chain is Insulin-like peptide 02 from Exaiptasia diaphana (Tropical sea anemone).